Consider the following 45-residue polypeptide: Photosystem II reaction center protein K (45 aa).

Positions 1-8 are excised as a propeptide; the sequence is MEAALLLA. A helical membrane pass occupies residues 24-44; the sequence is LPVIPVFFLLLAFVWQAAVGF.

This sequence belongs to the PsbK family. In terms of assembly, PSII is composed of 1 copy each of membrane proteins PsbA, PsbB, PsbC, PsbD, PsbE, PsbF, PsbH, PsbI, PsbJ, PsbK, PsbL, PsbM, PsbT, PsbX, PsbY, PsbZ, Psb30/Ycf12, peripheral proteins PsbO, CyanoQ (PsbQ), PsbU, PsbV and a large number of cofactors. It forms dimeric complexes.

It is found in the cellular thylakoid membrane. In terms of biological role, one of the components of the core complex of photosystem II (PSII). PSII is a light-driven water:plastoquinone oxidoreductase that uses light energy to abstract electrons from H(2)O, generating O(2) and a proton gradient subsequently used for ATP formation. It consists of a core antenna complex that captures photons, and an electron transfer chain that converts photonic excitation into a charge separation. In Synechococcus elongatus (strain ATCC 33912 / PCC 7942 / FACHB-805) (Anacystis nidulans R2), this protein is Photosystem II reaction center protein K.